Reading from the N-terminus, the 496-residue chain is Pyrrole-2-carboxylic acid decarboxylase (496 aa).

A K(+)-binding site is contributed by Trp-166. Prenylated FMN-binding residues include Val-168, Arg-170, Gln-187, and His-188. His-188 contributes to the Mn(2+) binding site. K(+) contacts are provided by Ala-218, Ala-219, Met-221, and Glu-229. Position 229 (Glu-229) interacts with prenylated FMN. A Mn(2+)-binding site is contributed by Glu-229. Catalysis depends on Glu-278, which acts as the Proton donor. His-386 contributes to the prenylated FMN binding site.

The protein belongs to the UbiD family. UbiD-like/FDC subfamily. Homodimer. The cofactor is prenylated FMN. Mn(2+) is required as a cofactor. It depends on K(+) as a cofactor.

It catalyses the reaction pyrrole-2-carboxylate + H(+) = 1H-pyrrole + CO2. The enzyme catalyses pyrrole-2-carboxylate + H2O = 1H-pyrrole + hydrogencarbonate. Its activity is regulated as follows. Imidazole acts as a reversible inhibitor via the formation of an imidazole-prenyl-FMN adduct. Activity is light sensitive. In terms of biological role, catalyzes the prenyl-FMN-dependent decarboxylation of pyrrole-2-carboxylate (P2C). Can also catalyze the carboxylation of pyrrole in the presence of elevated concentrations of CO(2) or bicarbonate. Can accept a modest range of heteroaromatic compounds such as 3-methylpyrrole-2-carboxylate, indole-3-carboxylate and furan-2-carboxylate, and shows very low activity with thiophene-2-carboxylate. Attenuates the virulence of P.aeruginosa in a Drosophila model when overexpressed. The protein is Pyrrole-2-carboxylic acid decarboxylase of Pseudomonas aeruginosa (strain ATCC 15692 / DSM 22644 / CIP 104116 / JCM 14847 / LMG 12228 / 1C / PRS 101 / PAO1).